A 308-amino-acid chain; its full sequence is Cytochrome c biogenesis protein CcsA (308 aa).

A run of 7 helical transmembrane segments spans residues isoleucine 17–cysteine 37, glycine 43–glycine 63, leucine 70–phenylalanine 90, methionine 142–isoleucine 162, valine 213–asparagine 233, glutamate 246–leucine 260, and alanine 274–leucine 294.

The protein belongs to the CcmF/CycK/Ccl1/NrfE/CcsA family. As to quaternary structure, may interact with Ccs1.

It is found in the plastid. The protein resides in the chloroplast thylakoid membrane. Functionally, required during biogenesis of c-type cytochromes (cytochrome c6 and cytochrome f) at the step of heme attachment. In Nymphaea alba (White water-lily), this protein is Cytochrome c biogenesis protein CcsA.